We begin with the raw amino-acid sequence, 49 residues long: MRVNITLECTSCHERTYLTSKNRRHNPDRLELNKYCPREQKVTLHRETK.

Belongs to the bacterial ribosomal protein bL33 family.

The sequence is that of Large ribosomal subunit protein bL33B from Limosilactobacillus reuteri subsp. reuteri (strain JCM 1112) (Lactobacillus reuteri).